Consider the following 192-residue polypeptide: Large ribosomal subunit protein uL10 (192 aa).

It belongs to the universal ribosomal protein uL10 family. As to quaternary structure, part of the ribosomal stalk of the 50S ribosomal subunit. The N-terminus interacts with L11 and the large rRNA to form the base of the stalk. The C-terminus forms an elongated spine to which L12 dimers bind in a sequential fashion forming a multimeric L10(L12)X complex.

Forms part of the ribosomal stalk, playing a central role in the interaction of the ribosome with GTP-bound translation factors. The polypeptide is Large ribosomal subunit protein uL10 (Gloeobacter violaceus (strain ATCC 29082 / PCC 7421)).